We begin with the raw amino-acid sequence, 274 residues long: ATP synthase subunit delta (274 aa).

This sequence belongs to the ATPase delta chain family. F-type ATPases have 2 components, F(1) - the catalytic core - and F(0) - the membrane proton channel. F(1) has five subunits: alpha(3), beta(3), gamma(1), delta(1), epsilon(1). F(0) has three main subunits: a(1), b(2) and c(10-14). The alpha and beta chains form an alternating ring which encloses part of the gamma chain. F(1) is attached to F(0) by a central stalk formed by the gamma and epsilon chains, while a peripheral stalk is formed by the delta and b chains.

Its subcellular location is the cell membrane. Functionally, f(1)F(0) ATP synthase produces ATP from ADP in the presence of a proton or sodium gradient. F-type ATPases consist of two structural domains, F(1) containing the extramembraneous catalytic core and F(0) containing the membrane proton channel, linked together by a central stalk and a peripheral stalk. During catalysis, ATP synthesis in the catalytic domain of F(1) is coupled via a rotary mechanism of the central stalk subunits to proton translocation. In terms of biological role, this protein is part of the stalk that links CF(0) to CF(1). It either transmits conformational changes from CF(0) to CF(1) or is implicated in proton conduction. This chain is ATP synthase subunit delta, found in Acidothermus cellulolyticus (strain ATCC 43068 / DSM 8971 / 11B).